A 274-amino-acid chain; its full sequence is MNAHNAALGGTPQRLKRGIPLALRGVARRFGEREVLKDIDLLVPAGQFVAIVGRSGCGKSTLLRLLAGLDQPSRGELLAGSAALAEAREDTRLMFQDSRLLPWKRVIDNVGLGLRGDWRAKARQALRAVGLAERANEWPAALSGGQKQRVALARALIHEPRLLLLDEPLGALDALTRIEMQQLIEGLWREHGFTVLLVTHDVSEAVAVADRVILIEDGEIGLDLPVELPRPRSRGSARLAALEAEVLNRVLAQPELPPQPEPVSPLPTQLRWAL.

The ABC transporter domain occupies 21-242; sequence LALRGVARRF…SRGSARLAAL (222 aa). 53–60 is a binding site for ATP; sequence GRSGCGKS.

Belongs to the ABC transporter superfamily. Aliphatic sulfonates importer (TC 3.A.1.17.2) family. The complex is composed of two ATP-binding proteins (SsuB), two transmembrane proteins (SsuC) and a solute-binding protein (SsuA).

It is found in the cell inner membrane. The catalysed reaction is ATP + H2O + aliphatic sulfonate-[sulfonate-binding protein]Side 1 = ADP + phosphate + aliphatic sulfonateSide 2 + [sulfonate-binding protein]Side 1.. Functionally, part of the ABC transporter complex SsuABC involved in aliphatic sulfonates import. Responsible for energy coupling to the transport system. This chain is Aliphatic sulfonates import ATP-binding protein SsuB 2, found in Pseudomonas aeruginosa (strain UCBPP-PA14).